Consider the following 433-residue polypeptide: Glutamate-1-semialdehyde 2,1-aminomutase (433 aa).

The residue at position 266 (Lys-266) is an N6-(pyridoxal phosphate)lysine.

Belongs to the class-III pyridoxal-phosphate-dependent aminotransferase family. HemL subfamily. As to quaternary structure, homodimer. Pyridoxal 5'-phosphate is required as a cofactor.

The protein resides in the cytoplasm. The catalysed reaction is (S)-4-amino-5-oxopentanoate = 5-aminolevulinate. It functions in the pathway porphyrin-containing compound metabolism; protoporphyrin-IX biosynthesis; 5-aminolevulinate from L-glutamyl-tRNA(Glu): step 2/2. The polypeptide is Glutamate-1-semialdehyde 2,1-aminomutase (Psychrobacter arcticus (strain DSM 17307 / VKM B-2377 / 273-4)).